The following is a 169-amino-acid chain: Ribosome maturation factor RimM (169 aa).

Residues 94 to 168 enclose the PRC barrel domain; the sequence is DDEFYHADLI…RIVADPPEGL (75 aa).

This sequence belongs to the RimM family. In terms of assembly, binds ribosomal protein uS19.

It localises to the cytoplasm. Its function is as follows. An accessory protein needed during the final step in the assembly of 30S ribosomal subunit, possibly for assembly of the head region. Essential for efficient processing of 16S rRNA. May be needed both before and after RbfA during the maturation of 16S rRNA. It has affinity for free ribosomal 30S subunits but not for 70S ribosomes. The sequence is that of Ribosome maturation factor RimM from Cereibacter sphaeroides (strain ATCC 17023 / DSM 158 / JCM 6121 / CCUG 31486 / LMG 2827 / NBRC 12203 / NCIMB 8253 / ATH 2.4.1.) (Rhodobacter sphaeroides).